The sequence spans 126 residues: Large ribosomal subunit protein uL22 (126 aa).

The protein belongs to the universal ribosomal protein uL22 family. As to quaternary structure, part of the 50S ribosomal subunit.

In terms of biological role, this protein binds specifically to 23S rRNA; its binding is stimulated by other ribosomal proteins, e.g. L4, L17, and L20. It is important during the early stages of 50S assembly. It makes multiple contacts with different domains of the 23S rRNA in the assembled 50S subunit and ribosome. Its function is as follows. The globular domain of the protein is located near the polypeptide exit tunnel on the outside of the subunit, while an extended beta-hairpin is found that lines the wall of the exit tunnel in the center of the 70S ribosome. This chain is Large ribosomal subunit protein uL22, found in Sphingopyxis alaskensis (strain DSM 13593 / LMG 18877 / RB2256) (Sphingomonas alaskensis).